The following is a 641-amino-acid chain: E3 ubiquitin-protein ligase TRIM47 (641 aa).

An RING-type zinc finger spans residues 9–58; that stretch reads CPICLEPLREPVTLPCGHNFCLACLGALWPHRSAGGTGGSGGPARCPLCQ. The residue at position 72 (Thr72) is a Phosphothreonine. Residues 81–123 form a disordered region; that stretch reads QGSVPGPMSAPASGSTRGATPEPSAPSAPPPAPEPSAPCAPEQ. A compositionally biased stretch (pro residues) spans 103-118; sequence PSAPSAPPPAPEPSAP. The B box-type zinc-finger motif lies at 181–221; that stretch reads LEESLCPRHLRPLERYCRVERVCLCEACATQDHRGHELVPL. Residues Cys186, His189, Cys208, and His213 each contribute to the Zn(2+) site. Residues 305–325 are a coiled coil; sequence QGDLRRQEEQRSRLSKARHNL. Residue Ser393 is modified to Phosphoserine. Residues 396–416 form a disordered region; the sequence is DGLQKLGSEDVESQDPDSTSL. One can recognise a B30.2/SPRY domain in the interval 413 to 634; sequence STSLLESEAP…LQIGPLKKSC (222 aa). Ser464 bears the Phosphoserine mark. An Omega-N-methylarginine modification is found at Arg585. Position 591 is a phosphoserine (Ser591).

It belongs to the TRIM/RBCC family. In terms of tissue distribution, expressed in hepatocytes, expression is increased in fatty livers.

The protein localises to the cytoplasm. It localises to the nucleus. It catalyses the reaction S-ubiquitinyl-[E2 ubiquitin-conjugating enzyme]-L-cysteine + [acceptor protein]-L-lysine = [E2 ubiquitin-conjugating enzyme]-L-cysteine + N(6)-ubiquitinyl-[acceptor protein]-L-lysine.. The protein operates within protein modification; protein ubiquitination. In terms of biological role, E3 ubiquitin-protein ligase that mediates the ubiquitination and proteasomal degradation of CYLD. This Mus musculus (Mouse) protein is E3 ubiquitin-protein ligase TRIM47.